A 603-amino-acid chain; its full sequence is Insulin-like growth factor-binding protein complex acid labile subunit (603 aa).

Residues 1–23 form the signal peptide; it reads MALRTGSPALVVLLAFWVALGPC. An LRRNT domain is found at 32-74; that stretch reads ASADAEGPQCPVTCTCSYDDYTDELSVFCSSRNLTQLPDGIPV. Intrachain disulfides connect cysteine 41-cysteine 47 and cysteine 45-cysteine 60. N-linked (GlcNAc...) asparagine glycosylation is found at asparagine 64, asparagine 85, and asparagine 96. LRR repeat units lie at residues 75–96, 99–120, 123–144, 147–168, 171–192, 195–216, 219–240, 243–264, 267–288, 291–312, 315–336, 339–360, 363–384, 387–408, 411–432, 435–456, 459–480, 483–504, and 507–528; these read STRA…AFQN, SLDF…ALLG, NLYH…LFRH, SLAS…LFRG, HLWD…VFQG, NLHE…LLCG, ELRE…VFIH, RLQK…AFLG, ALRW…TFPG, GLHV…TFKD, FLEE…TFEG, QLEV…AFFG, NVAV…VFQG, RLHS…TFAG, GLRR…SLAG, ELLE…LFQG, QLEY…VLGP, RAFW…LFSS, and RLRY…PGLE. N-linked (GlcNAc...) asparagine glycosylation occurs at asparagine 368. Residue asparagine 515 is glycosylated (N-linked (GlcNAc...) asparagine). In terms of domain architecture, LRRCT spans 535 to 603; that stretch reads NPWDCSCPLK…DISETLFVHC (69 aa). Disulfide bonds link cysteine 539-cysteine 581, cysteine 541-cysteine 603, and cysteine 565-cysteine 570. Asparagine 578 and asparagine 586 each carry an N-linked (GlcNAc...) asparagine glycan.

In terms of assembly, forms a ternary complex with IGF1 and IGFBP3.

It is found in the secreted. The protein resides in the extracellular space. May have an important role in regulating the access of circulating IGFs to the tissues. The polypeptide is Insulin-like growth factor-binding protein complex acid labile subunit (Igfals) (Mus musculus (Mouse)).